A 155-amino-acid chain; its full sequence is 6,7-dimethyl-8-ribityllumazine synthase (155 aa).

Residues phenylalanine 23, 57–59, and 81–83 contribute to the 5-amino-6-(D-ribitylamino)uracil site; these read AFE and AVI. Residue 86-87 coordinates (2S)-2-hydroxy-3-oxobutyl phosphate; it reads AT. The active-site Proton donor is the histidine 89. Position 114 (phenylalanine 114) interacts with 5-amino-6-(D-ribitylamino)uracil. (2S)-2-hydroxy-3-oxobutyl phosphate is bound at residue arginine 128.

It belongs to the DMRL synthase family.

The catalysed reaction is (2S)-2-hydroxy-3-oxobutyl phosphate + 5-amino-6-(D-ribitylamino)uracil = 6,7-dimethyl-8-(1-D-ribityl)lumazine + phosphate + 2 H2O + H(+). Its pathway is cofactor biosynthesis; riboflavin biosynthesis; riboflavin from 2-hydroxy-3-oxobutyl phosphate and 5-amino-6-(D-ribitylamino)uracil: step 1/2. Its function is as follows. Catalyzes the formation of 6,7-dimethyl-8-ribityllumazine by condensation of 5-amino-6-(D-ribitylamino)uracil with 3,4-dihydroxy-2-butanone 4-phosphate. This is the penultimate step in the biosynthesis of riboflavin. The protein is 6,7-dimethyl-8-ribityllumazine synthase of Pelotomaculum thermopropionicum (strain DSM 13744 / JCM 10971 / SI).